A 372-amino-acid chain; its full sequence is Flagellar P-ring protein (372 aa).

The first 26 residues, 1 to 26 (MNLSSLPFRLLAAAVALCAIAAPASA), serve as a signal peptide directing secretion.

The protein belongs to the FlgI family. As to quaternary structure, the basal body constitutes a major portion of the flagellar organelle and consists of four rings (L,P,S, and M) mounted on a central rod.

It localises to the periplasm. Its subcellular location is the bacterial flagellum basal body. Its function is as follows. Assembles around the rod to form the L-ring and probably protects the motor/basal body from shearing forces during rotation. The chain is Flagellar P-ring protein from Xanthomonas campestris pv. campestris (strain B100).